A 389-amino-acid chain; its full sequence is MDARELIDKYHMNTYSRFPVTLVPGEGARVWDDEGNEYIDLVAGIAVNVLGHCHPAVVEAVKEQVERLIHCSNLYYNEPQAEAARLLAEAAPKDLNKVFFCNSGTESVECAIKLARKFTGCTKFIAFEGGFHGRTMGALSATWKPEFREPFEPLVPEFEHVPYGDVNAVEKAIDDDTAAVIVEPVQGEAGVRIPPEGFLRELRELCDEHGLLLIVDEVQSGMGRTGQFFAFEHEDVLPDIVCLAKGLGGGVPVGATIAREEVAEAFEPGDHGSTFGGNPLACAAVCAAVSTVLEENLPEAAERKGKLAMRILSEAEDVVEEVRGRGLMMGVEVGDDERAKDVAREMLDRGALVNVTSGDVIRLVPPLVIGEDELEKALAELADALRASG.

Pyridoxal 5'-phosphate is bound by residues 104 to 105 and F131; that span reads GT. R134 contributes to the N(2)-acetyl-L-ornithine binding site. 216 to 219 is a binding site for pyridoxal 5'-phosphate; it reads DEVQ. K245 carries the post-translational modification N6-(pyridoxal phosphate)lysine. Residue S273 coordinates N(2)-acetyl-L-ornithine. T274 contacts pyridoxal 5'-phosphate.

The protein belongs to the class-III pyridoxal-phosphate-dependent aminotransferase family. ArgD subfamily. Homodimer. Pyridoxal 5'-phosphate is required as a cofactor.

It is found in the cytoplasm. The catalysed reaction is N(2)-acetyl-L-ornithine + 2-oxoglutarate = N-acetyl-L-glutamate 5-semialdehyde + L-glutamate. It participates in amino-acid biosynthesis; L-arginine biosynthesis; N(2)-acetyl-L-ornithine from L-glutamate: step 4/4. The protein is Acetylornithine aminotransferase of Methanopyrus kandleri (strain AV19 / DSM 6324 / JCM 9639 / NBRC 100938).